The chain runs to 286 residues: Structure-specific endonuclease subunit SLX1 (286 aa).

Residues 15–98 enclose the GIY-YIG domain; sequence SFYGVYILKS…QHAYQTRHIN (84 aa).

The protein belongs to the SLX1 family. As to quaternary structure, forms a heterodimer with SLX4. A divalent metal cation serves as cofactor.

The protein localises to the nucleus. In terms of biological role, catalytic subunit of the SLX1-SLX4 structure-specific endonuclease that resolves DNA secondary structures generated during DNA repair and recombination. Has endonuclease activity towards branched DNA substrates, introducing single-strand cuts in duplex DNA close to junctions with ss-DNA. The chain is Structure-specific endonuclease subunit SLX1 from Candida dubliniensis (strain CD36 / ATCC MYA-646 / CBS 7987 / NCPF 3949 / NRRL Y-17841) (Yeast).